The primary structure comprises 541 residues: Interleukin-18 receptor 1 (541 aa).

A signal peptide spans 1–18; sequence MNCRELPLTLWVLISVST. 2 disulfide bridges follow: cysteine 22-cysteine 41 and cysteine 43-cysteine 81. Residues 22-329 lie on the Extracellular side of the membrane; sequence CTSRPHITVV…ADIPGHVFTR (308 aa). Ig-like C2-type domains are found at residues 33–121, 133–212, and 220–312; these read GEPF…SCFT, KKFF…DRSN, and PKLN…KSFI. Asparagine 91, asparagine 102, asparagine 150, asparagine 197, asparagine 203, asparagine 236, asparagine 255, and asparagine 297 each carry an N-linked (GlcNAc...) asparagine glycan. 2 disulfide bridges follow: cysteine 119/cysteine 158 and cysteine 140/cysteine 185. The cysteines at positions 237 and 298 are disulfide-linked. The chain crosses the membrane as a helical span at residues 330–350; the sequence is GMIIAVLILVAVVCLVTVCVI. Residues 351 to 541 lie on the Cytoplasmic side of the membrane; that stretch reads YRVDLVLFYR…PEVLPVLSES (191 aa). The region spanning 373 to 520 is the TIR domain; sequence KTYDAFVSYL…RFWKNLLYLM (148 aa). Glutamate 455 is a catalytic residue.

Belongs to the interleukin-1 receptor family. Forms a ternary complex with IL18 and IL18RAP. Within this complex, IL18R1 is involved in ligand-binding and IL18RAP in signaling leading to NF-kappa-B and JNK activation. Interacts with SLC12A3 in peritoneal macrophages; this interaction is increased by IL18 treatment. In terms of processing, N-glycosylated. N-linked glycosyl chains contribute to ligand recognition and intra-receptor interactions required for formation of an active ternary receptor complex. Highly expressed in leukocytes, spleen, lung. Also expressed, but at lower levels, in liver, small intestine, colon, prostate, thymus, placenta, and heart. Specifically coexpressed with IL18R1 in Th1 cells.

It is found in the membrane. It catalyses the reaction NAD(+) + H2O = ADP-D-ribose + nicotinamide + H(+). Functionally, within the IL18 receptor complex, responsible for the binding of the pro-inflammatory cytokine IL18, but not IL1A nor IL1B. Involved in IL18-mediated IFNG synthesis from T-helper 1 (Th1) cells. Contributes to IL18-induced cytokine production, either independently of SLC12A3, or as a complex with SLC12A3. The sequence is that of Interleukin-18 receptor 1 from Homo sapiens (Human).